The following is a 518-amino-acid chain: Glutamate--cysteine ligase (518 aa).

This sequence belongs to the glutamate--cysteine ligase type 1 family. Type 1 subfamily.

The enzyme catalyses L-cysteine + L-glutamate + ATP = gamma-L-glutamyl-L-cysteine + ADP + phosphate + H(+). Its pathway is sulfur metabolism; glutathione biosynthesis; glutathione from L-cysteine and L-glutamate: step 1/2. The sequence is that of Glutamate--cysteine ligase from Salmonella gallinarum (strain 287/91 / NCTC 13346).